The sequence spans 417 residues: Tyrosine--tRNA ligase (417 aa).

An L-tyrosine-binding site is contributed by Tyr35. The 'HIGH' region signature appears at 40-49 (ATAGSLTVGH). L-tyrosine is bound by residues Tyr165 and Gln169. Positions 229–233 (KFGKS) match the 'KMSKS' region motif. Lys232 is a binding site for ATP. One can recognise an S4 RNA-binding domain in the interval 350–416 (ISLLEALVFT…GKRFNALIIF (67 aa)).

The protein belongs to the class-I aminoacyl-tRNA synthetase family. TyrS type 1 subfamily. Homodimer.

The protein localises to the cytoplasm. It carries out the reaction tRNA(Tyr) + L-tyrosine + ATP = L-tyrosyl-tRNA(Tyr) + AMP + diphosphate + H(+). Its function is as follows. Catalyzes the attachment of tyrosine to tRNA(Tyr) in a two-step reaction: tyrosine is first activated by ATP to form Tyr-AMP and then transferred to the acceptor end of tRNA(Tyr). This chain is Tyrosine--tRNA ligase, found in Phytoplasma mali (strain AT).